A 156-amino-acid chain; its full sequence is Small ribosomal subunit protein uS7 (156 aa).

The protein belongs to the universal ribosomal protein uS7 family. Part of the 30S ribosomal subunit. Contacts proteins S9 and S11.

One of the primary rRNA binding proteins, it binds directly to 16S rRNA where it nucleates assembly of the head domain of the 30S subunit. Is located at the subunit interface close to the decoding center, probably blocks exit of the E-site tRNA. This chain is Small ribosomal subunit protein uS7, found in Streptococcus thermophilus (strain CNRZ 1066).